Consider the following 113-residue polypeptide: Type III endosome membrane protein TEMP (113 aa).

Positions 1 to 22 are disordered; that stretch reads MNETNKTLVGPSELPTASAVAP. Topologically, residues 1-29 are extracellular; that stretch reads MNETNKTLVGPSELPTASAVAPGPGTGAR. Asn5 carries an N-linked (GlcNAc...) asparagine glycan. The chain crosses the membrane as a helical; Signal-anchor for type III membrane protein span at residues 30–50; the sequence is AWPVLVGFVLGAVVLSLLIAL. At 51-113 the chain is on the cytoplasmic side; that stretch reads AAKCHLCRRY…TEGSRDHFSL (63 aa). Positions 66–113 are disordered; that stretch reads HRPLPETGRGGRPQVAEDEDDDGFIEDNYIQPGTGELGTEGSRDHFSL. Positions 81 to 90 are enriched in acidic residues; sequence AEDEDDDGFI.

Its subcellular location is the membrane. It localises to the early endosome. The protein resides in the recycling endosome. It is found in the cell membrane. May be involved in membrane trafficking between endosomes and plasma membrane. This chain is Type III endosome membrane protein TEMP (C1orf210), found in Homo sapiens (Human).